The chain runs to 653 residues: DNA-directed RNA polymerase III subunit RPC-3 (653 aa).

3 disordered regions span residues 141–186, 280–309, and 422–442; these read INGV…DSDP, DSSA…DFSD, and IKED…KRRG. Basic and acidic residues predominate over residues 159–170; that stretch reads AENHTDHAHDYQ. 2 stretches are compositionally biased toward acidic residues: residues 293–309 and 424–433; these read PLED…DFSD and EDEDDEDEEG. The tract at residues 580-601 is leucine-zipper; that stretch reads TYKSMSRCLQRIRVEREKLKFL.

It belongs to the RNA polymerase beta chain family. Component of the RNA polymerase III (Pol III) complex consisting of 17 subunits.

Its subcellular location is the nucleus. Functionally, DNA-dependent RNA polymerase catalyzes the transcription of DNA into RNA using the four ribonucleoside triphosphates as substrates. Specific core component of RNA polymerase III which synthesizes small RNAs, such as 5S rRNA and tRNAs. The polypeptide is DNA-directed RNA polymerase III subunit RPC-3 (RPC-82) (Coccidioides immitis (strain RS) (Valley fever fungus)).